The sequence spans 660 residues: Macrolide export ATP-binding/permease protein MacB (660 aa).

The ABC transporter domain occupies 10–248 (LVLENIVRKF…AKGQALQGKQ (239 aa)). An ATP-binding site is contributed by 46–53 (GASGSGKS). Transmembrane regions (helical) follow at residues 285-305 (FLTM…VALG), 532-552 (ILTL…GIGV), 593-613 (IIGG…FVLF), and 625-645 (SIII…FSPA).

The protein belongs to the ABC transporter superfamily. Macrolide exporter (TC 3.A.1.122) family. In terms of assembly, homodimer.

The protein localises to the cell inner membrane. Its function is as follows. Non-canonical ABC transporter that contains transmembrane domains (TMD), which form a pore in the inner membrane, and an ATP-binding domain (NBD), which is responsible for energy generation. Confers resistance against macrolides. The chain is Macrolide export ATP-binding/permease protein MacB from Bartonella quintana (strain Toulouse) (Rochalimaea quintana).